A 544-amino-acid chain; its full sequence is Chaperonin GroEL (544 aa).

ATP-binding positions include 29 to 32 (TLGP), lysine 50, 86 to 90 (DGTTT), glycine 415, and aspartate 495.

The protein belongs to the chaperonin (HSP60) family. Forms a cylinder of 14 subunits composed of two heptameric rings stacked back-to-back. Interacts with the co-chaperonin GroES.

The protein resides in the cytoplasm. The enzyme catalyses ATP + H2O + a folded polypeptide = ADP + phosphate + an unfolded polypeptide.. Functionally, together with its co-chaperonin GroES, plays an essential role in assisting protein folding. The GroEL-GroES system forms a nano-cage that allows encapsulation of the non-native substrate proteins and provides a physical environment optimized to promote and accelerate protein folding. The chain is Chaperonin GroEL from Tannerella forsythia (Bacteroides forsythus).